The chain runs to 523 residues: Magnesium/proton exchanger 1 (523 aa).

11 consecutive transmembrane segments (helical) span residues 24-44, 88-108, 125-145, 157-177, 185-205, 325-345, 349-369, 377-397, 428-448, 461-481, and 495-515; these read LLPI…CFIG, IADV…LATI, GTLV…CVVM, LGVW…LYII, VITL…LLHA, VIGI…AFVP, IAHG…IAYG, ISCV…AAGT, VNIY…NYFV, LSFS…VLVL, and MWAW…VVLS.

It belongs to the Ca(2+):cation antiporter (CaCA) (TC 2.A.19) family. MHX subfamily.

The protein localises to the vacuole membrane. In terms of biological role, vacuolar transporter that exchanges protons with Mg(2+), Zn(2+) and Fe(2+) ions. May control the partitioning of Mg(2+) and Zn(2+) between plant organs. This chain is Magnesium/proton exchanger 1 (MHX1), found in Oryza sativa subsp. japonica (Rice).